The sequence spans 201 residues: FMN-dependent NADH:quinone oxidoreductase (201 aa).

Residues S10, 16–18, 96–99, and 140–143 contribute to the FMN site; these read SQS, MYNF, and SRGG.

Belongs to the azoreductase type 1 family. Homodimer. It depends on FMN as a cofactor.

It carries out the reaction 2 a quinone + NADH + H(+) = 2 a 1,4-benzosemiquinone + NAD(+). The catalysed reaction is N,N-dimethyl-1,4-phenylenediamine + anthranilate + 2 NAD(+) = 2-(4-dimethylaminophenyl)diazenylbenzoate + 2 NADH + 2 H(+). Its function is as follows. Quinone reductase that provides resistance to thiol-specific stress caused by electrophilic quinones. Functionally, also exhibits azoreductase activity. Catalyzes the reductive cleavage of the azo bond in aromatic azo compounds to the corresponding amines. The polypeptide is FMN-dependent NADH:quinone oxidoreductase (Cronobacter sakazakii (strain ATCC BAA-894) (Enterobacter sakazakii)).